A 329-amino-acid polypeptide reads, in one-letter code: MATNIGMMDSAYFVGRSEILAWINSTLQLNLSKVEEACSGAVHCQLMDSVHPGTVPMHKVNFDAKSEYEMIQNYKVLQDVFNKLKITKHIEVSKLVKGRPLDNLEFMQWMKKYCDSVNGGQHNYHALERREASKGGKEATKRAAATQQSGKSSSSSAPPRPSSSNGTRKHEPQSNNTGTHHSSTGNHHHSSKPSAKQSKPVPAYDEKITELKLYIDSLEKERDFYFSKLRDVEILCQNPDTEHLPLVGSIKRILYAADGEDVGAAETQTLSPIAEGSEERRNSVTESQKRKLIVNLDVDVAAITTLSPRQRLSDASDVKCSGSSPLLTC.

A Calponin-homology (CH) domain is found at 13–115 (FVGRSEILAW…FMQWMKKYCD (103 aa)). Residues 130-141 (REASKGGKEATK) are compositionally biased toward basic and acidic residues. The interval 130-203 (REASKGGKEA…SAKQSKPVPA (74 aa)) is disordered. Positions 174-185 (SNNTGTHHSSTG) are enriched in low complexity. The EB1 C-terminal domain occupies 193–263 (PSAKQSKPVP…LYAADGEDVG (71 aa)). Residues 289–311 (KRKLIVNLDVDVAAITTLSPRQR) are required for nuclear localization.

Belongs to the MAPRE family. Homodimer. As to expression, highly expressed in the root and shoot meristems, in guard cells of leaf stomata, pollen grains and pollen tubes.

The protein resides in the nucleus. The protein localises to the cytoplasm. It is found in the cytoskeleton. Its subcellular location is the spindle. It localises to the phragmoplast. In terms of biological role, plant-specific EB1 subtype that functions preferentially at early stages of plant mitosis by regulating spindle positioning and chromosome segregation. Accumulates in the prophase nucleus and is required to maintain spindle bipolarity during premetaphase and/or metaphase and for efficient segregation of chromosomes at anaphase. May play a role in the dynamics of microtubule network in elongating pollen tubes. This chain is Microtubule-associated protein RP/EB family member 1C (EB1C), found in Arabidopsis thaliana (Mouse-ear cress).